We begin with the raw amino-acid sequence, 191 residues long: Small ribosomal subunit protein eS7 (191 aa).

The residue at position 1 (Met1) is an N-acetylmethionine.

This sequence belongs to the eukaryotic ribosomal protein eS7 family.

The polypeptide is Small ribosomal subunit protein eS7 (RPS7) (Brassica oleracea (Wild cabbage)).